A 279-amino-acid polypeptide reads, in one-letter code: Universal stress protein MT2087 (279 aa).

Belongs to the universal stress protein A family.

The protein is Universal stress protein MT2087 of Mycobacterium tuberculosis (strain CDC 1551 / Oshkosh).